The chain runs to 366 residues: Flagellar P-ring protein (366 aa).

An N-terminal signal peptide occupies residues 1–20; sequence MVIKFLSALILLLVTTAAQA.

It belongs to the FlgI family. In terms of assembly, the basal body constitutes a major portion of the flagellar organelle and consists of four rings (L,P,S, and M) mounted on a central rod.

It localises to the periplasm. The protein localises to the bacterial flagellum basal body. Assembles around the rod to form the L-ring and probably protects the motor/basal body from shearing forces during rotation. The chain is Flagellar P-ring protein from Escherichia coli (strain SE11).